A 376-amino-acid chain; its full sequence is Ribonucleoside-diphosphate reductase subunit beta (376 aa).

Asp-85, Glu-116, and His-119 together coordinate Fe cation. Tyr-123 is a catalytic residue. Residues Glu-205, Glu-239, and His-242 each contribute to the Fe cation site.

Belongs to the ribonucleoside diphosphate reductase small chain family. In terms of assembly, tetramer of two alpha and two beta subunits. The cofactor is Fe cation.

The catalysed reaction is a 2'-deoxyribonucleoside 5'-diphosphate + [thioredoxin]-disulfide + H2O = a ribonucleoside 5'-diphosphate + [thioredoxin]-dithiol. Provides the precursors necessary for DNA synthesis. Catalyzes the biosynthesis of deoxyribonucleotides from the corresponding ribonucleotides. This is Ribonucleoside-diphosphate reductase subunit beta (nrdB) from Buchnera aphidicola subsp. Schizaphis graminum (strain Sg).